Consider the following 564-residue polypeptide: Pyranose 2-oxidase (564 aa).

The propeptide occupies 1–25 (MPIRLSKEKINDLLQRSQGDLTSSQ). Residue histidine 158 is modified to Tele-8alpha-FAD histidine. 2 residues coordinate substrate: glutamine 392 and histidine 394. Histidine 498 acts as the Proton acceptor in catalysis. The active site involves asparagine 541.

The protein belongs to the GMC oxidoreductase family. As to quaternary structure, homotetramer. The cofactor is FAD.

It catalyses the reaction D-glucose + O2 = 2-dehydro-D-glucose + H2O2. Its function is as follows. Catalyzes the oxidation of various aldopyranoses and disaccharides on carbon-2 to the corresponding 2-keto sugars concomitant with the reduction of O(2) to H(2)O(2). The preferred substrate is D-glucose which is converted to 2-dehydro-D-glucose. Acts also on D-xylose, L-sorbose, D-galactose and 1,5-anhydroglucitol, a diagnostic marker of diabetes mellitus. The chain is Pyranose 2-oxidase (p2ox) from Tricholoma matsutake (Matsutake mushroom).